The sequence spans 1016 residues: Poly [ADP-ribose] polymerase 1 (1016 aa).

At Ala-2 the chain carries N-acetylalanine. A PARP-type 1 zinc finger spans residues 9–93 (YRVEYAKSGR…TIKKMAETGG (85 aa)). The Zn(2+) site is built by Cys-21 and Cys-24. Ser-41 carries the phosphoserine modification. The Zn(2+) site is built by His-53 and Cys-56. An N6-acetyllysine mark is found at Lys-100 and Lys-108. A PARP-type 2 zinc finger spans residues 116–206 (FGAGYAKSNR…TLKKQLPAIK (91 aa)). Positions 128 and 131 each coordinate Zn(2+). Lys-134 carries the N6-acetyllysine modification. His-162 and Cys-165 together coordinate Zn(2+). Phosphoserine is present on residues Ser-180 and Ser-188. Lys-206 participates in a covalent cross-link: Glycyl lysine isopeptide (Lys-Gly) (interchain with G-Cter in SUMO1); alternate. A Glycyl lysine isopeptide (Lys-Gly) (interchain with G-Cter in SUMO2); alternate cross-link involves residue Lys-206. 2 consecutive short sequence motifs (nuclear localization signal) follow at residues 210–212 (KRK) and 224–229 (KKKSKK). The PADR1 zinc-binding domain maps to 228–362 (KKEKDKEIKL…IKKQDRIFPP (135 aa)). Lys-252 is covalently cross-linked (Glycyl lysine isopeptide (Lys-Gly) (interchain with G-Cter in SUMO2)). Phosphoserine occurs at positions 277 and 280. The tract at residues 293–335 (GALLPCEECSGQLVFKGDAYYCTGDVTAWTKCMVKTQTPNRKE) is zinc ribbon. The Zn(2+) site is built by Cys-298, Cys-301, Cys-314, and Cys-324. Positions 360–390 (FPPESSTPVGAAAPPSAASAPAAVHSGPPDK) are disordered. Low complexity predominate over residues 365 to 386 (STPVGAAAPPSAASAPAAVHSG). The tract at residues 376–526 (AASAPAAVHS…GTNKSEKRMK (151 aa)) is automodification domain. The 92-residue stretch at 387-478 (PPDKPLSNMK…KSLQELLSTH (92 aa)) folds into the BRCT domain. PolyADP-ribosyl aspartic acid is present on Asp-389. PolyADP-ribosyl glutamic acid occurs at positions 409, 415, 437, 446, 447, 450, and 458. Lys-469 participates in a covalent cross-link: Glycyl lysine isopeptide (Lys-Gly) (interchain with G-Cter in SUMO2). Glu-473 and Glu-486 each carry polyADP-ribosyl glutamic acid. Residue Lys-488 forms a Glycyl lysine isopeptide (Lys-Gly) (interchain with G-Cter in SUMO1); alternate linkage. Residue Lys-488 forms a Glycyl lysine isopeptide (Lys-Gly) (interchain with G-Cter in SUMO2); alternate linkage. PolyADP-ribosyl glutamic acid is present on residues Glu-490 and Glu-493. Residues 494–523 (AVGPKGKSGAAPSKKSKGPVKEEGTNKSEK) form a disordered region. Low complexity predominate over residues 496–506 (GPKGKSGAAPS). Residues Ser-501, Ser-506, and Ser-509 each carry the ADP-ribosylserine modification. The segment covering 512–523 (PVKEEGTNKSEK) has biased composition (basic and acidic residues). A Glycyl lysine isopeptide (Lys-Gly) (interchain with G-Cter in SUMO2) cross-link involves residue Lys-514. Glu-515 and Glu-516 each carry polyADP-ribosyl glutamic acid. At Ser-521 the chain carries ADP-ribosylserine. The residue at position 522 (Glu-522) is a PolyADP-ribosyl glutamic acid. The residue at position 523 (Lys-523) is an N6-(ADP-ribosyl)lysine. Lys-530 is covalently cross-linked (Glycyl lysine isopeptide (Lys-Gly) (interchain with G-Cter in SUMO2)). Positions 544–640 (NAHVLEKGGK…KNFTKHPKKF (97 aa)) constitute a WGR domain. Position 596 is a phosphothreonine (Thr-596). 2 positions are modified to N6-acetyllysine: Lys-602 and Lys-623. Positions 664–781 (KSKLPKPVQN…DIEVAYSLLR (118 aa)) constitute a PARP alpha-helical domain. Residue Lys-750 forms a Glycyl lysine isopeptide (Lys-Gly) (interchain with G-Cter in SUMO1); alternate linkage. Lys-750 is covalently cross-linked (Glycyl lysine isopeptide (Lys-Gly) (interchain with G-Cter in SUMO2); alternate). Residues Ser-784 and Ser-788 each carry the phosphoserine modification. A PARP catalytic domain is found at 790 to 1016 (DPIDVNYEKL…LKFNFKTSLW (227 aa)). Residues 864 to 866 (HGS), Gly-873, Arg-880, and Ser-906 contribute to the NAD(+) site. Glu-990 acts as the For poly [ADP-ribose] polymerase activity in catalysis.

Belongs to the ARTD/PARP family. As to quaternary structure, homodimer; PARP-type zinc-fingers from separate PARP1 molecules form a dimer module that specifically recognizes DNA strand breaks. Heterodimer; heterodimerizes with PARP2. Interacts (via the PARP catalytic domain) with HPF1. Interacts with NMNAT1. Interacts with nucleosomes; with a preference for nucleosomes containing H2A.X. Interacts with APTX. Component of a base excision repair (BER) complex, containing at least XRCC1, PARP1, PARP2, POLB and LRIG3. Interacts with SRY. The SWAP complex consists of NPM1, NCL, PARP1 and SWAP70. Interacts with TIAM2. Interacts with PARP3; leading to activate PARP1 in absence of DNA. Interacts (when poly-ADP-ribosylated) with CHD1L (via macro domain). Interacts with the DNA polymerase alpha catalytic subunit POLA1; this interaction functions as part of the control of replication fork progression. Interacts with EEF1A1 and TXK. Interacts with RNF4. Interacts with RNF146. Interacts with ZNF423. Interacts with APLF. Interacts with SNAI1 (via zinc fingers); the interaction requires SNAI1 to be poly-ADP-ribosylated and non-phosphorylated (active) by GSK3B. Interacts (when poly-ADP-ribosylated) with PARP9. Interacts with NR4A3; activates PARP1 by improving acetylation of PARP1 and suppressing the interaction between PARP1 and SIRT1. Interacts (via catalytic domain) with PUM3; the interaction inhibits the poly-ADP-ribosylation activity of PARP1 and the degradation of PARP1 by CASP3 following genotoxic stress. Interacts with ZNF365. Interacts with RRP1B. Interacts with TIMELESS; the interaction is direct. Interacts with CGAS; leading to impede the formation of the PARP1-TIMELESS complex. Interacts with KHDC3L, the interaction is increased following the formation of DNA double-strand breaks. Interacts (when auto-poly-ADP-ribosylated) with XRCC1; leading to inhibit PARP1 ADP-ribosyltransferase activity. Interacts with SPINDOC; promoting PARP1 ADP-ribosyltransferase activity. Interacts with BANF1; leading to inhibit PARP1 ADP-ribosyltransferase activity in response to oxidative DNA damage. Interacts (when sumoylated and ubiquitinated) with VCP/p97; leading to its extraction from chromatin. Interacts with YARS1; promoting PARP1 ADP-ribosyltransferase activity. Interacts with PACMP micropeptide; Interacts with PACMP micropeptide; interaction. Interacts (when poly-ADP-ribosylated) with isoform 1 of MACROH2A1; MACROH2A1 specifically binds to poly-ADP-ribose chains and inhibits PARP1 activity, limiting the consumption of nuclear NAD(+). Interacts with CARM1; promoting recruitment to replication forks. Interacts with RECQL. Interacts with ZNF32; the interaction reshapes ZNF432 interacting proteins. Interacts with TPRN; TPRN interacts with a number of DNA damage response proteins, is recruited to sites of DNA damage and may play a role in DNA damage repair. In terms of assembly, interacts (when auto-poly-ADP-ribosylated) with AIFM1. Poly-ADP-ribosylated on serine, glutamate and aspartate residues by autocatalysis. Auto-ADP-ribosylation on serine takes place following interaction with HPF1. Auto poly-ADP-ribosylation on serine residues promotes its dissociation from chromatin. Poly-ADP-ribosylated by PARP2; poly-ADP-ribosylation mediates the recruitment of CHD1L to DNA damage sites. Mono-ADP-ribosylated at Lys-523 by SIRT6 in response to oxidative stress, promoting recruitment to double-strand breaks (DSBs) sites. Post-translationally, S-nitrosylated, leading to inhibit transcription regulation activity. In terms of processing, phosphorylated at Thr-596 by PRKDC in response to DNA damage following virus infection, promoting its translocation to the cytosol. Phosphorylated by TXK. Proteolytically cleaved by caspase-3 (CASP3) and caspase-7 (CASP7) in response to apoptosis to generate the Poly [ADP-ribose] polymerase 1, processed N-terminus and Poly [ADP-ribose] polymerase 1, processed C-terminus forms. Post-translationally, sumoylated with SUMO1 or SUMO2 by PIAS4 following prolonged residence (trapping) to chromatin. Sumoylation promotes ubiquitination by RNF4 and removal from chromatin by VCP/p97. In terms of processing, ubiquitinated by RNF4 following sumoylation by PIAS4 in response to prolonged residence (trapping) to chromatin. Ubiquitination promotes removal from chromatin by VCP/p97.

The protein resides in the chromosome. The protein localises to the nucleus. Its subcellular location is the nucleolus. It is found in the cytoplasm. It localises to the cytosol. The catalysed reaction is NAD(+) + (ADP-D-ribosyl)n-acceptor = nicotinamide + (ADP-D-ribosyl)n+1-acceptor + H(+).. It carries out the reaction L-seryl-[protein] + NAD(+) = O-(ADP-D-ribosyl)-L-seryl-[protein] + nicotinamide + H(+). It catalyses the reaction L-aspartyl-[protein] + NAD(+) = 4-O-(ADP-D-ribosyl)-L-aspartyl-[protein] + nicotinamide. The enzyme catalyses L-glutamyl-[protein] + NAD(+) = 5-O-(ADP-D-ribosyl)-L-glutamyl-[protein] + nicotinamide. The catalysed reaction is L-tyrosyl-[protein] + NAD(+) = O-(ADP-D-ribosyl)-L-tyrosyl-[protein] + nicotinamide + H(+). It carries out the reaction L-histidyl-[protein] + NAD(+) = N(tele)-(ADP-D-ribosyl)-L-histidyl-[protein] + nicotinamide + H(+). ADP-ribosyltransferase activity is regulated via an allosteric activation mechanism. In absence of activation signal, PARP1 is autoinhibited by the PARP alpha-helical domain (also named HD region), which prevents effective NAD(+)-binding. Activity is highly stimulated by signals, such as DNA strand breaks. Binding to damaged DNA unfolds the PARP alpha-helical domain, relieving autoinhibition. Poly-ADP-ribosyltransferase activity is tightly regulated and PARP1 is removed from damaged chromatin following initial poly-ADP-ribosylation of chromatin to avoid prolonged residence (trapping) that has cytotoxic consequences. A number of factors (VCP/p97) or post-translational modifications (auto-poly-ADP-ribosylation or ubiquitination) promote PARP1 removal from chromatin. Its function is as follows. Poly-ADP-ribosyltransferase that mediates poly-ADP-ribosylation of proteins and plays a key role in DNA repair. Mediates glutamate, aspartate, serine, histidine or tyrosine ADP-ribosylation of proteins: the ADP-D-ribosyl group of NAD(+) is transferred to the acceptor carboxyl group of target residues and further ADP-ribosyl groups are transferred to the 2'-position of the terminal adenosine moiety, building up a polymer with an average chain length of 20-30 units. Serine ADP-ribosylation of proteins constitutes the primary form of ADP-ribosylation of proteins in response to DNA damage. Specificity for the different amino acids is conferred by interacting factors, such as HPF1 and NMNAT1. Following interaction with HPF1, catalyzes serine ADP-ribosylation of target proteins; HPF1 confers serine specificity by completing the PARP1 active site. Also catalyzes tyrosine ADP-ribosylation of target proteins following interaction with HPF1. Following interaction with NMNAT1, catalyzes glutamate and aspartate ADP-ribosylation of target proteins; NMNAT1 confers glutamate and aspartate specificity. PARP1 initiates the repair of DNA breaks: recognizes and binds DNA breaks within chromatin and recruits HPF1, licensing serine ADP-ribosylation of target proteins, such as histones (H2BS6ADPr and H3S10ADPr), thereby promoting decompaction of chromatin and the recruitment of repair factors leading to the reparation of DNA strand breaks. HPF1 initiates serine ADP-ribosylation but restricts the polymerase activity of PARP1 in order to limit the length of poly-ADP-ribose chains. In addition to base excision repair (BER) pathway, also involved in double-strand breaks (DSBs) repair: together with TIMELESS, accumulates at DNA damage sites and promotes homologous recombination repair by mediating poly-ADP-ribosylation. Mediates the poly-ADP-ribosylation of a number of proteins, including itself, APLF, CHFR and NFAT5. In addition to proteins, also able to ADP-ribosylate DNA: catalyzes ADP-ribosylation of DNA strand break termini containing terminal phosphates and a 2'-OH group in single- and double-stranded DNA, respectively. Required for PARP9 and DTX3L recruitment to DNA damage sites. PARP1-dependent PARP9-DTX3L-mediated ubiquitination promotes the rapid and specific recruitment of 53BP1/TP53BP1, UIMC1/RAP80, and BRCA1 to DNA damage sites. PARP1-mediated DNA repair in neurons plays a role in sleep: senses DNA damage in neurons and promotes sleep, facilitating efficient DNA repair. In addition to DNA repair, also involved in other processes, such as transcription regulation, programmed cell death, membrane repair, adipogenesis and innate immunity. Acts as a repressor of transcription: binds to nucleosomes and modulates chromatin structure in a manner similar to histone H1, thereby altering RNA polymerase II. Acts both as a positive and negative regulator of transcription elongation, depending on the context. Acts as a positive regulator of transcription elongation by mediating poly-ADP-ribosylation of NELFE, preventing RNA-binding activity of NELFE and relieving transcription pausing. Acts as a negative regulator of transcription elongation in response to DNA damage by catalyzing poly-ADP-ribosylation of CCNT1, disrupting the phase separation activity of CCNT1 and subsequent activation of CDK9. Involved in replication fork progression following interaction with CARM1: mediates poly-ADP-ribosylation at replication forks, slowing fork progression. Poly-ADP-ribose chains generated by PARP1 also play a role in poly-ADP-ribose-dependent cell death, a process named parthanatos. Also acts as a negative regulator of the cGAS-STING pathway. Acts by mediating poly-ADP-ribosylation of CGAS: PARP1 translocates into the cytosol following phosphorylation by PRKDC and catalyzes poly-ADP-ribosylation and inactivation of CGAS. Acts as a negative regulator of adipogenesis: catalyzes poly-ADP-ribosylation of histone H2B on 'Glu-35' (H2BE35ADPr) following interaction with NMNAT1, inhibiting phosphorylation of H2B at 'Ser-36' (H2BS36ph), thereby blocking expression of pro-adipogenetic genes. Involved in the synthesis of ATP in the nucleus, together with NMNAT1, PARG and NUDT5. Nuclear ATP generation is required for extensive chromatin remodeling events that are energy-consuming. In terms of biological role, promotes AIFM1-mediated apoptosis. This form, which translocates into the cytoplasm following cleavage by caspase-3 (CASP3) and caspase-7 (CASP7) in response to apoptosis, is auto-poly-ADP-ribosylated and serves as a poly-ADP-ribose carrier to induce AIFM1-mediated apoptosis. Functionally, this cleavage form irreversibly binds to DNA breaks and interferes with DNA repair, promoting DNA damage-induced apoptosis. This is Poly [ADP-ribose] polymerase 1 (PARP1) from Bos taurus (Bovine).